We begin with the raw amino-acid sequence, 39 residues long: Photosystem II reaction center protein J (39 aa).

Residues 7 to 27 (IPLWLVATVAGMGVITLLGIF) form a helical membrane-spanning segment.

It belongs to the PsbJ family. PSII is composed of 1 copy each of membrane proteins PsbA, PsbB, PsbC, PsbD, PsbE, PsbF, PsbH, PsbI, PsbJ, PsbK, PsbL, PsbM, PsbT, PsbX, PsbY, PsbZ, Psb30/Ycf12, peripheral proteins PsbO, CyanoQ (PsbQ), PsbU, PsbV and a large number of cofactors. It forms dimeric complexes.

Its subcellular location is the cellular thylakoid membrane. Its function is as follows. One of the components of the core complex of photosystem II (PSII). PSII is a light-driven water:plastoquinone oxidoreductase that uses light energy to abstract electrons from H(2)O, generating O(2) and a proton gradient subsequently used for ATP formation. It consists of a core antenna complex that captures photons, and an electron transfer chain that converts photonic excitation into a charge separation. In Cyanothece sp. (strain PCC 7425 / ATCC 29141), this protein is Photosystem II reaction center protein J.